Here is a 170-residue protein sequence, read N- to C-terminus: MNLDSKIRVIEDFPKKGISFKDITTLLKDKEAFRSMVDQLSDQLIDLDIDIVVGPEARGFLVGAPVAYKIGAGFVPIRKPGKLPGETISYEYELEYGTDSLEIHTDAIQPGQRVAILDDLLATGGTVVATAKLIEELGGEVVSINFLIELGFLNGGEVLKGYSVKSLLKY.

Belongs to the purine/pyrimidine phosphoribosyltransferase family. Homodimer.

It localises to the cytoplasm. The enzyme catalyses AMP + diphosphate = 5-phospho-alpha-D-ribose 1-diphosphate + adenine. It functions in the pathway purine metabolism; AMP biosynthesis via salvage pathway; AMP from adenine: step 1/1. In terms of biological role, catalyzes a salvage reaction resulting in the formation of AMP, that is energically less costly than de novo synthesis. The chain is Adenine phosphoribosyltransferase from Alkaliphilus metalliredigens (strain QYMF).